The chain runs to 236 residues: Class B acid phosphatase (236 aa).

Residues 1-22 form the signal peptide; the sequence is MNHTLRSITLVLACVASLSANA. The active-site Nucleophile is the Asp-70. Positions 70 and 72 each coordinate Mg(2+). Asp-72 acts as the Proton donor in catalysis. Substrate is bound by residues 138-139 and Lys-176; that span reads TG. Asp-191 contributes to the Mg(2+) binding site.

This sequence belongs to the class B bacterial acid phosphatase family. Homotetramer. Mg(2+) is required as a cofactor.

It localises to the periplasm. The enzyme catalyses a phosphate monoester + H2O = an alcohol + phosphate. In terms of biological role, dephosphorylates several organic phosphate monoesters. Also has a phosphotransferase activity catalyzing the transfer of low-energy phosphate groups from organic phosphate monoesters to free hydroxyl groups of various organic compounds. The polypeptide is Class B acid phosphatase (Marinomonas sp. (strain MWYL1)).